A 187-amino-acid polypeptide reads, in one-letter code: Potassium-transporting ATPase KdpC subunit (187 aa).

Residues 11–31 traverse the membrane as a helical segment; it reads LILLMTVVTGALYPLAVTGIA.

The protein belongs to the KdpC family. In terms of assembly, the system is composed of three essential subunits: KdpA, KdpB and KdpC.

It localises to the cell inner membrane. Its function is as follows. Part of the high-affinity ATP-driven potassium transport (or Kdp) system, which catalyzes the hydrolysis of ATP coupled with the electrogenic transport of potassium into the cytoplasm. This subunit acts as a catalytic chaperone that increases the ATP-binding affinity of the ATP-hydrolyzing subunit KdpB by the formation of a transient KdpB/KdpC/ATP ternary complex. This chain is Potassium-transporting ATPase KdpC subunit, found in Pseudomonas entomophila (strain L48).